The chain runs to 164 residues: FMN reductase (NADH) RutF (164 aa).

This sequence belongs to the non-flavoprotein flavin reductase family. RutF subfamily.

It catalyses the reaction FMNH2 + NAD(+) = FMN + NADH + 2 H(+). Functionally, catalyzes the reduction of FMN to FMNH2 which is used to reduce pyrimidine by RutA via the Rut pathway. This chain is FMN reductase (NADH) RutF, found in Escherichia coli O150:H5 (strain SE15).